An 86-amino-acid polypeptide reads, in one-letter code: RNA-binding protein Hfq (86 aa).

Positions Asp9 to Val68 constitute a Sm domain.

The protein belongs to the Hfq family. As to quaternary structure, homohexamer.

In terms of biological role, RNA chaperone that binds small regulatory RNA (sRNAs) and mRNAs to facilitate mRNA translational regulation in response to envelope stress, environmental stress and changes in metabolite concentrations. Also binds with high specificity to tRNAs. The protein is RNA-binding protein Hfq of Saccharophagus degradans (strain 2-40 / ATCC 43961 / DSM 17024).